We begin with the raw amino-acid sequence, 1041 residues long: Cullin-associated NEDD8-dissociated protein 1, C-terminal part (1041 aa).

2 disordered regions span residues 1-24 (MSSDAMSDYSHDDEHDPQTDELRE) and 64-103 (DMGEDEEMSGTQDDGSEDDVTEEPDLEDDDFEDFEEEGGY). Over residues 9 to 24 (YSHDDEHDPQTDELRE) the composition is skewed to basic and acidic residues. The span at 65–103 (MGEDEEMSGTQDDGSEDDVTEEPDLEDDDFEDFEEEGGY) shows a compositional bias: acidic residues. One copy of the HEAT 1 repeat lies at 138–176 (SLYQQIAPAIVARFNKEREESVKLELVSTMDALVRKTAE). The disordered stretch occupies residues 189 to 237 (SVGSGSKISRKRRRQDSDASMIDFEPSMGTSSAAGTPLAAPSSPQSGPQ). A compositionally biased stretch (low complexity) spans 225-237 (PLAAPSSPQSGPQ). HEAT repeat units lie at residues 242–279 (NALPVIVRSLVTMWKQASIHLKQAIIILLKSLALVRYG), 339–376 (PFLIALIPGVIVAVNDKNYKVSSEALAAVEQIVKALTP), 434–472 (LSFEKRSKGLVTLVDRLKNETTRLSAVRAIDDVAVLCSR), 479–516 (NWVREVTAELGAQLRKSDRVLRSASLETLRSLSMNPNT), 525–560 (MKNLEECLIPLISVEDVHLLAPSLIIIAKLVPGNAQ), 598–637 (GSGLTLMQNLLQDVGVNGDTSVVGRSIGTLLVHGGSNVGV), 670–708 (GASCSLTPNVFIPHFNSKSEKVRLASATALGNAAAGNVK), 710–744 (YLPTILGGLEKSDPQSYLLLHSVKELLQHPEMVRR), 780–817 (LDPPAYIPQFQEYLANGDAGIRSIVVSAFRFTLSDSRD), and 822–867 (VLRP…HLGE).

The protein belongs to the CAND family. Interacts with candA-N. Interacts with unneddylated cullins culA and culD.

It localises to the nucleus. Functionally, assembly factor of SCF (SKP1-CUL1-F-box protein) E3 ubiquitin ligase complexes that promotes the exchange of the substrate-recognition F-box subunit in SCF complexes, thereby playing a key role in the cellular repertoire of SCF complexes. Acts as a F-box protein exchange factor when interacting with candA-N. This chain is Cullin-associated NEDD8-dissociated protein 1, C-terminal part (candA-C), found in Emericella nidulans (strain FGSC A4 / ATCC 38163 / CBS 112.46 / NRRL 194 / M139) (Aspergillus nidulans).